The chain runs to 176 residues: ATP-dependent protease subunit HslV (176 aa).

Thr-5 is an active-site residue. Na(+) contacts are provided by Ser-161, Cys-164, and Thr-167.

The protein belongs to the peptidase T1B family. HslV subfamily. In terms of assembly, a double ring-shaped homohexamer of HslV is capped on each side by a ring-shaped HslU homohexamer. The assembly of the HslU/HslV complex is dependent on binding of ATP.

The protein resides in the cytoplasm. It catalyses the reaction ATP-dependent cleavage of peptide bonds with broad specificity.. Its activity is regulated as follows. Allosterically activated by HslU binding. In terms of biological role, protease subunit of a proteasome-like degradation complex believed to be a general protein degrading machinery. The chain is ATP-dependent protease subunit HslV from Caldanaerobacter subterraneus subsp. tengcongensis (strain DSM 15242 / JCM 11007 / NBRC 100824 / MB4) (Thermoanaerobacter tengcongensis).